The chain runs to 557 residues: Glucose-6-phosphate isomerase (557 aa).

Catalysis depends on Glu361, which acts as the Proton donor. Residues His392 and Lys520 contribute to the active site.

The protein belongs to the GPI family.

Its subcellular location is the cytoplasm. The enzyme catalyses alpha-D-glucose 6-phosphate = beta-D-fructose 6-phosphate. Its pathway is carbohydrate biosynthesis; gluconeogenesis. It functions in the pathway carbohydrate degradation; glycolysis; D-glyceraldehyde 3-phosphate and glycerone phosphate from D-glucose: step 2/4. In terms of biological role, catalyzes the reversible isomerization of glucose-6-phosphate to fructose-6-phosphate. This Acinetobacter baylyi (strain ATCC 33305 / BD413 / ADP1) protein is Glucose-6-phosphate isomerase.